A 67-amino-acid chain; its full sequence is Colostrum trypsin inhibitor (67 aa).

Residues 8–58 enclose the BPTI/Kunitz inhibitor domain; it reads CQLPQARGPCKAALLRYFYNSTSNACEPFTYGGCQGNNBNFETTEMCLRIC. 3 cysteine pairs are disulfide-bonded: Cys8-Cys58, Cys17-Cys41, and Cys33-Cys54. A glycan (N-linked (GlcNAc...) asparagine) is linked at Asn27.

It is found in the secreted. The chain is Colostrum trypsin inhibitor from Bos taurus (Bovine).